Here is a 147-residue protein sequence, read N- to C-terminus: RxLR effector protein Avr3a (147 aa).

The signal sequence occupies residues Met1 to Ala21. Positions Arg44 to Arg59 match the RxLR-dEER motif. Lys48 is modified (N6-acetyllysine). The segment at Ala77–Tyr147 is effector domain.

It belongs to the RxLR effector family. In terms of assembly, forms homodimers via the RxLR-dEER motif. Interacts with host E3 ligase CMPG1. Interacts with host DRP2. Proteolytically cleaved. The cleavage site directly after the RxLR sequence and the high conservation among other effector proteins suggest that the RxLR motif might play a crucial role in the intracellular processing before secretion. In terms of processing, glycosylated. Post-translationally, N-acetylated at Lys-48 after cleavage.

The protein resides in the secreted. It is found in the host cytoplasm. In terms of biological role, multifunctional effector that can suppress host BAK1/SERK3-mediated immunity through at least two different pathways. Manipulates plant immunity by targeting and stabilizing host E3 ligase CMPG1. Preventing the normal 26S proteasome-dependent degradation of potato CMPG1, and thus potentially of its protein substrates in the host cell, further abolishes host cell death during the biotrophic phase of infection. Also associates with and affects the function of the dynamin-related protein 2 (DRP2), a plant GTPase involved in immune receptor-mediated endocytosis. The Avr3a(EM) form evades recognition by R3a, thus does not trigger R3a-mediated hypersensitivity and does not suppress INF1-induced cell death. This is RxLR effector protein Avr3a from Phytophthora infestans (Potato late blight agent).